Reading from the N-terminus, the 1077-residue chain is Carbamoyl phosphate synthase large chain (1077 aa).

The interval 1–403 (MPKRTDIQSI…SLHKALRGLE (403 aa)) is carboxyphosphate synthetic domain. 12 residues coordinate ATP: arginine 129, arginine 169, glycine 175, glycine 176, glutamate 208, leucine 210, glutamate 215, glycine 241, isoleucine 242, histidine 243, glutamine 285, and glutamate 299. The ATP-grasp 1 domain maps to 133-328 (DKAMKSIGLE…IAKIAAKLAV (196 aa)). The Mg(2+) site is built by glutamine 285, glutamate 299, and asparagine 301. Mn(2+) is bound by residues glutamine 285, glutamate 299, and asparagine 301. The segment at 404 to 553 (VGATGFDEMV…YSSYDDECEA (150 aa)) is oligomerization domain. The interval 554 to 935 (NPTDKEKIMV…AYAKAELGCG (382 aa)) is carbamoyl phosphate synthetic domain. The ATP-grasp 2 domain maps to 678-869 (QQAVDRLGLL…LAKIAARVMA (192 aa)). The ATP site is built by arginine 714, arginine 753, leucine 755, glutamate 760, glycine 785, valine 786, histidine 787, serine 788, glutamine 828, and glutamate 840. Positions 828, 840, and 842 each coordinate Mg(2+). Residues glutamine 828, glutamate 840, and asparagine 842 each contribute to the Mn(2+) site. In terms of domain architecture, MGS-like spans 936 to 1077 (NVYPEGGRAL…HAQVQASLKA (142 aa)). The interval 936–1077 (NVYPEGGRAL…HAQVQASLKA (142 aa)) is allosteric domain.

This sequence belongs to the CarB family. As to quaternary structure, composed of two chains; the small (or glutamine) chain promotes the hydrolysis of glutamine to ammonia, which is used by the large (or ammonia) chain to synthesize carbamoyl phosphate. Tetramer of heterodimers (alpha,beta)4. The cofactor is Mg(2+). Mn(2+) serves as cofactor.

The catalysed reaction is hydrogencarbonate + L-glutamine + 2 ATP + H2O = carbamoyl phosphate + L-glutamate + 2 ADP + phosphate + 2 H(+). The enzyme catalyses hydrogencarbonate + NH4(+) + 2 ATP = carbamoyl phosphate + 2 ADP + phosphate + 2 H(+). Its pathway is amino-acid biosynthesis; L-arginine biosynthesis; carbamoyl phosphate from bicarbonate: step 1/1. It functions in the pathway pyrimidine metabolism; UMP biosynthesis via de novo pathway; (S)-dihydroorotate from bicarbonate: step 1/3. Its function is as follows. Large subunit of the glutamine-dependent carbamoyl phosphate synthetase (CPSase). CPSase catalyzes the formation of carbamoyl phosphate from the ammonia moiety of glutamine, carbonate, and phosphate donated by ATP, constituting the first step of 2 biosynthetic pathways, one leading to arginine and/or urea and the other to pyrimidine nucleotides. The large subunit (synthetase) binds the substrates ammonia (free or transferred from glutamine from the small subunit), hydrogencarbonate and ATP and carries out an ATP-coupled ligase reaction, activating hydrogencarbonate by forming carboxy phosphate which reacts with ammonia to form carbamoyl phosphate. The sequence is that of Carbamoyl phosphate synthase large chain from Vibrio vulnificus (strain CMCP6).